The sequence spans 317 residues: Spore protein CgeB (317 aa).

Functionally, may be involved in maturation of the outermost layer of the spore. May act as a glycosyltransferase that contributes to the glycosylation state of the spore. The sequence is that of Spore protein CgeB from Bacillus subtilis (strain 168).